A 402-amino-acid polypeptide reads, in one-letter code: GTPase HflX (402 aa).

In terms of domain architecture, Hflx-type G spans 181–350 (DTVGLIGYTN…MIIEHLNLSI (170 aa)). GTP contacts are provided by residues 187 to 194 (GYTNAGKT), 212 to 216 (FTTLT), 233 to 236 (DTVG), 300 to 303 (NKVD), and 328 to 330 (SAK). Mg(2+) is bound by residues threonine 194 and threonine 214.

Belongs to the TRAFAC class OBG-HflX-like GTPase superfamily. HflX GTPase family. In terms of assembly, monomer. Associates with the 50S ribosomal subunit. Mg(2+) serves as cofactor.

The protein resides in the cytoplasm. In terms of biological role, GTPase that associates with the 50S ribosomal subunit and may have a role during protein synthesis or ribosome biogenesis. The chain is GTPase HflX from Methanocaldococcus jannaschii (strain ATCC 43067 / DSM 2661 / JAL-1 / JCM 10045 / NBRC 100440) (Methanococcus jannaschii).